A 664-amino-acid chain; its full sequence is DNA primase (664 aa).

A CHC2-type zinc finger spans residues 40 to 64 (CPFHKEKTPSFTVSPDKQFYYCFGC). Positions 94–104 (GMDVPREERGG) are enriched in basic and acidic residues. The interval 94-115 (GMDVPREERGGRGHTPRQPTDS) is disordered. A Toprim domain is found at 262–344 (DEIMVVEGYM…GKRVRFLFLP (83 aa)). Mg(2+) contacts are provided by E268, D312, and D314. The segment at 483-521 (PRKSWNKDKKPWDGKKWDGKKKWDKGGRGDFKAPQRTPV) is disordered. The segment covering 487 to 515 (WNKDKKPWDGKKWDGKKKWDKGGRGDFKA) has biased composition (basic and acidic residues).

Belongs to the DnaG primase family. As to quaternary structure, monomer. Interacts with DnaB. Zn(2+) is required as a cofactor. Requires Mg(2+) as cofactor.

The enzyme catalyses ssDNA + n NTP = ssDNA/pppN(pN)n-1 hybrid + (n-1) diphosphate.. Its function is as follows. RNA polymerase that catalyzes the synthesis of short RNA molecules used as primers for DNA polymerase during DNA replication. In Pseudomonas aeruginosa (strain ATCC 15692 / DSM 22644 / CIP 104116 / JCM 14847 / LMG 12228 / 1C / PRS 101 / PAO1), this protein is DNA primase.